The primary structure comprises 856 residues: Genome polyprotein (856 aa).

The Peptidase S30 domain maps to 141–284; sequence KLTEGQMNHL…QSVLNSMIQF (144 aa). Residues histidine 192, aspartate 201, and serine 235 each act as for P1 proteinase activity in the active site. Positions 334 to 337 match the Involved in interaction with stylet and aphid transmission motif; sequence KITC. Positions 592-594 match the Involved in virions binding and aphid transmission motif; that stretch reads PTK. The Peptidase C6 domain occupies 618–740; the sequence is LYIAKQGYCY…ESDIKHYRVG (123 aa). Active-site for helper component proteinase activity residues include cysteine 626 and histidine 699.

It belongs to the potyviridae genome polyprotein family. In terms of processing, genome polyprotein of potyviruses undergoes post-translational proteolytic processing by the main proteinase NIa-pro resulting in the production of at least ten individual proteins. The P1 proteinase and the HC-pro cleave only their respective C-termini autocatalytically. 6K1 is essential for proper proteolytic separation of P3 from CI.

It carries out the reaction Hydrolyzes a Gly-|-Gly bond at its own C-terminus, commonly in the sequence -Tyr-Xaa-Val-Gly-|-Gly, in the processing of the potyviral polyprotein.. Required for aphid transmission and also has proteolytic activity. Only cleaves a Gly-Gly dipeptide at its own C-terminus. Interacts with virions and aphid stylets. Acts as a suppressor of RNA-mediated gene silencing, also known as post-transcriptional gene silencing (PTGS), a mechanism of plant viral defense that limits the accumulation of viral RNAs. May have RNA-binding activity. This chain is Genome polyprotein, found in Potato virus Y (strain O) (PVY).